Reading from the N-terminus, the 404-residue chain is ATP phosphoribosyltransferase regulatory subunit (404 aa).

Belongs to the class-II aminoacyl-tRNA synthetase family. HisZ subfamily. As to quaternary structure, heteromultimer composed of HisG and HisZ subunits.

It localises to the cytoplasm. It participates in amino-acid biosynthesis; L-histidine biosynthesis; L-histidine from 5-phospho-alpha-D-ribose 1-diphosphate: step 1/9. Functionally, required for the first step of histidine biosynthesis. May allow the feedback regulation of ATP phosphoribosyltransferase activity by histidine. In Picosynechococcus sp. (strain ATCC 27264 / PCC 7002 / PR-6) (Agmenellum quadruplicatum), this protein is ATP phosphoribosyltransferase regulatory subunit.